We begin with the raw amino-acid sequence, 311 residues long: 4-hydroxy-tetrahydrodipicolinate synthase (311 aa).

T51 serves as a coordination point for pyruvate. Residue Y140 is the Proton donor/acceptor of the active site. The active-site Schiff-base intermediate with substrate is K168. Pyruvate is bound at residue I209.

This sequence belongs to the DapA family. As to quaternary structure, homotetramer; dimer of dimers.

It is found in the cytoplasm. It carries out the reaction L-aspartate 4-semialdehyde + pyruvate = (2S,4S)-4-hydroxy-2,3,4,5-tetrahydrodipicolinate + H2O + H(+). The protein operates within amino-acid biosynthesis; L-lysine biosynthesis via DAP pathway; (S)-tetrahydrodipicolinate from L-aspartate: step 3/4. Functionally, catalyzes the condensation of (S)-aspartate-beta-semialdehyde [(S)-ASA] and pyruvate to 4-hydroxy-tetrahydrodipicolinate (HTPA). In Streptococcus pneumoniae (strain Hungary19A-6), this protein is 4-hydroxy-tetrahydrodipicolinate synthase.